The chain runs to 1138 residues: Nuclear pore complex-interacting protein family member B4 (1138 aa).

Residues 63–87 (VIIAFPTSYKVVITLWIVYLWVSLL) form a helical membrane-spanning segment. 3 disordered regions span residues 241–263 (NRMG…SLSL), 291–620 (TPLP…NIKT), and 873–1138 (ERLR…RRLS). Over residues 252-262 (QQHSITDNSLS) the composition is skewed to polar residues. Over residues 349–359 (PLPPSALPSAP) the composition is skewed to pro residues. Basic and acidic residues-rich tracts occupy residues 406–416 (DNIKTPAERLR), 448–458 (DNIKTPAERLR), 490–500 (DNIKTPAERLR), 532–542 (DNIKTPAERLR), 574–584 (DNIKTPAERLR), 908–918 (DNIKTPAERLR), 950–960 (DNIKTPAERLR), and 992–1002 (DNIKTPAERLR).

It belongs to the NPIP family.

It localises to the membrane. This chain is Nuclear pore complex-interacting protein family member B4 (NPIPB4), found in Homo sapiens (Human).